Here is a 319-residue protein sequence, read N- to C-terminus: MMFLSFNMISGGNTLQRFDPVACVSSVPLLLAPTTRPTFHFPSPFLSKPKPTYLFTSFSSSSSSSSSFFSSTTPPRSTMLHHDPLVSDVYATAISGVVALSFLRLFQETAKRDLFDQKLNRKLVHISIGLIFMLCXPLFSTETWASFFAALIPGINIFRMLVIGLGILKDEATVKSMSRFGDYRELLKGPLYYAATITLAAIIYWRTSPISIAAICNLCAGDGMADIVGRRLGGEKIPYNKNKSFAGSIAMATAGFLTSIGYMWYFSSFGFIEGSWKLVLGFLLVSIVTAFVESLPISTELDDNLTVPLTSILVGSIIL.

A chloroplast-targeting transit peptide spans 1–22 (MMFLSFNMISGGNTLQRFDPVA). 6 consecutive transmembrane segments (helical) span residues 83-103 (DPLV…LSFL), 123-143 (LVHI…STET), 147-167 (FFAA…GLGI), 185-205 (ELLK…IIYW), 252-272 (ATAG…FGFI), and 278-298 (LVLG…LPIS).

This sequence belongs to the polyprenol kinase family.

It is found in the plastid. It localises to the chloroplast membrane. The catalysed reaction is phytol + CTP = phytyl phosphate + CDP + H(+). Its pathway is cofactor biosynthesis; tocopherol biosynthesis. Its function is as follows. Involved in the activation and reutilization of phytol from chlorophyll degradation in plant metabolism, including tocopherol biosynthesis. Catalyzes the conversion of phytol to phytol monophosphate (PMP). The protein is Probable phytol kinase 3, chloroplastic of Glycine max (Soybean).